The chain runs to 246 residues: tRNA pseudouridine synthase A (246 aa).

Residue D52 is the Nucleophile of the active site. Substrate is bound at residue Y110.

The protein belongs to the tRNA pseudouridine synthase TruA family. In terms of assembly, homodimer.

It catalyses the reaction uridine(38/39/40) in tRNA = pseudouridine(38/39/40) in tRNA. In terms of biological role, formation of pseudouridine at positions 38, 39 and 40 in the anticodon stem and loop of transfer RNAs. In Exiguobacterium sp. (strain ATCC BAA-1283 / AT1b), this protein is tRNA pseudouridine synthase A.